A 615-amino-acid chain; its full sequence is MAPSKRKASAPPQTSHVNGNPSADKKRKTTTDAPPTNPNTSSDPLRAPHPFYKDSETHGIVLRKFYPHEMSNARAQAYNDNELPRPIETLSAALAETAALRKSLPVRQAVVHWFKMDLRLHDNRSLWLASQKAKEAGVPLICLYVLSPEDLEAHLRAPIRVDFMLRTLEVLKTDLEDLGIPLWVETVEKRKEVPTKIKELMKSWGASHLFCAMEYEVDELRREAKLVKLLAEGEKGEKMAADVVHDTCVVMPGALQSGSGGQYAVYSPWFRAWIKHIEENPECLEIYEKPGPNPPGTKEKHENLFACSIPEAPEGKRLRDDEKARYHSLWPAGEHEALKRLEKFCDEAIGKYAERRNIPAMQGTSNLSVHFASGTLSARTAIRTARDRNNTKKLNGGNEGIQRWISEVAWRDFYKHVLVHWPYVCMNKPFKPTYSNIEWSYNVDHFHAWTQGRTGFPIIDAAMRQVLSTGYMHNRLRMIVASFLAKDLLVDWRMGERYFMEHLIDGDFASNNGGWGFAASVGVDPQPYFRVFNPLLQSEKFDPDGDYIRKWVEELRDLPELKGGKGGEIHDPYGRGSEKVKKKLEEKGYPRPIVEHSGARDRALDAYKRGLARDL.

The disordered stretch occupies residues 1–53 (MAPSKRKASAPPQTSHVNGNPSADKKRKTTTDAPPTNPNTSSDPLRAPHPFYK). Residues 11-21 (PPQTSHVNGNP) show a composition bias toward polar residues. Over residues 31 to 40 (TDAPPTNPNT) the composition is skewed to low complexity. Positions 108–249 (QAVVHWFKMD…AADVVHDTCV (142 aa)) constitute a Photolyase/cryptochrome alpha/beta domain. Residue Y352 participates in FAD binding. A DNA-binding site is contributed by R356. 364–368 (TSNLS) provides a ligand contact to FAD. Interaction with DNA regions lie at residues 407–414 (EVAWRDFY) and 474–475 (NR). 505 to 507 (DGD) contacts FAD. Q537 lines the DNA pocket.

The protein belongs to the DNA photolyase class-1 family. As to quaternary structure, monomer. The cofactor is FAD. Requires (6R)-5,10-methylene-5,6,7,8-tetrahydrofolate as cofactor.

The enzyme catalyses cyclobutadipyrimidine (in DNA) = 2 pyrimidine residues (in DNA).. Functionally, involved in repair of UV radiation-induced DNA damage. Catalyzes the light-dependent monomerization (300-600 nm) of cyclobutyl pyrimidine dimers (in cis-syn configuration), which are formed between adjacent bases on the same DNA strand upon exposure to ultraviolet radiation. The polypeptide is Deoxyribodipyrimidine photo-lyase (phr) (Neurospora crassa (strain ATCC 24698 / 74-OR23-1A / CBS 708.71 / DSM 1257 / FGSC 987)).